We begin with the raw amino-acid sequence, 379 residues long: Putative zinc metalloprotease sll0528 (379 aa).

2 helical membrane passes run 20–40 (LFGI…LVTL) and 54–74 (GGTP…SVVA). Histidine 75 contributes to the Zn(2+) binding site. Residue glutamate 76 is part of the active site. Zn(2+) is bound at residue histidine 79. 3 helical membrane-spanning segments follow: residues 115-135 (FAVA…LTIV), 148-168 (IIGL…IPGL), and 212-232 (GILN…WFLL). 2 CBS domains span residues 257-315 (VIPN…DWPQ) and 322-379 (MQYP…TSAA).

This sequence belongs to the peptidase M50B family. Zn(2+) is required as a cofactor.

It localises to the cell membrane. The protein is Putative zinc metalloprotease sll0528 of Synechocystis sp. (strain ATCC 27184 / PCC 6803 / Kazusa).